The primary structure comprises 177 residues: 3-isopropylmalate dehydratase small subunit 1 (177 aa).

Residues 157–177 (GRFPGEEPGAEASTETASAAE) form a disordered region. The span at 162–177 (EEPGAEASTETASAAE) shows a compositional bias: low complexity.

It belongs to the LeuD family. LeuD type 2 subfamily. Heterodimer of LeuC and LeuD.

It catalyses the reaction (2R,3S)-3-isopropylmalate = (2S)-2-isopropylmalate. It participates in amino-acid biosynthesis; L-leucine biosynthesis; L-leucine from 3-methyl-2-oxobutanoate: step 2/4. In terms of biological role, catalyzes the isomerization between 2-isopropylmalate and 3-isopropylmalate, via the formation of 2-isopropylmaleate. The polypeptide is 3-isopropylmalate dehydratase small subunit 1 (leuD1) (Deinococcus radiodurans (strain ATCC 13939 / DSM 20539 / JCM 16871 / CCUG 27074 / LMG 4051 / NBRC 15346 / NCIMB 9279 / VKM B-1422 / R1)).